A 440-amino-acid chain; its full sequence is Indoleamine 2,3-dioxygenase qulI (440 aa).

H347 is a binding site for heme.

This sequence belongs to the indoleamine 2,3-dioxygenase family. In terms of assembly, monomer. It depends on heme as a cofactor.

It carries out the reaction D-tryptophan + O2 = N-formyl-D-kynurenine. The catalysed reaction is L-tryptophan + O2 = N-formyl-L-kynurenine. The protein operates within secondary metabolite biosynthesis. In terms of biological role, indoleamine 2,3-dioxygenase; part of the gene cluster that mediates the biosynthesis of quinolactacin A2 (QUL A2), a fungal alkaloid that features a quinolone-gamma-lactam hybrid, which is a potential pharmacophore for the treatment of cancer and Alzheimer's disease. The quinolone-gamma-lactam hybrid scaffold is synthesized from the combination of L-isoleucine (L-Ile) and the nonproteinogenic amino acid L-kynurenine, followed by quinolone cyclization, oxidative decarboxylation, and lactam formation. Additionally, the N-methyl group is derived from methionine, which might be catalyzed by an S-adenosylmethionine (SAM)-dependent methyltransferase. Bioconversion of L-tryptophan to L-kynurenine could be catalyzed by the indoleamine-2,3-dioxygenase (IDO) qulI to produce an unstable product, N-formyl-L-kynurenine, followed by kynurenine formamidase catalyzed hydrolysis. QulM then acts as a methyltransferase that methylates L-kynurenine at the N-4 position. The FMN-dependent alpha-hydroxy acid dehydrogenase qulF than functions as an oxidative decarboxylase which converts N-methylkynurenine into 2-aminobenzoylacetamide via 2 tandem reactions, including dehydrogenation and decarboxylation. An amidase located outside of the qul gene cluster further produces the unstable beta-keto acid precursor N-methyl-2-aminobenzoylacetate, which could be spontaneously dehydrated to form N-methyl-4-hydroxy-2-quinolone. The NRPS qulB is able to incorporate N-methyl-2-aminobenzoylacetate and efficiently compete with the spontaneous reaction. By further extending the beta-keto acid with L-Ile, qulA performs a Dieckmann condensation to form the gamma-lactam ring and release a 4-ketopyrrolidinone intermediate from the assembly line. This intermediate could plausibly further undergo a spontaneous cyclization to yield the final quinolone-gamma-lactam hybrid structure. This chain is Indoleamine 2,3-dioxygenase qulI, found in Penicillium citrinum.